Here is a 359-residue protein sequence, read N- to C-terminus: Stearoyl-CoA desaturase (359 aa).

At 1 to 72 (MPAHLLQEEI…EGPKPKLEYV (72 aa)) the chain is on the cytoplasmic side. Residues 73-93 (WRNIILMGLLHLGALYGITLI) form a helical membrane-spanning segment. Asn75 is a binding site for substrate. Over 94 to 97 (PTCK) the chain is Lumenal. Residues 98–118 (IYTFLWVLFYYMMSALGITAG) form a helical membrane-spanning segment. At 119 to 217 (VHRLWSHRTY…EKLVMFQRRY (99 aa)) the chain is on the cytoplasmic side. His120 and His125 together coordinate Fe cation. The Histidine box-1 signature appears at 120 to 125 (HRLWSH). Asn148, Arg155, and Asp156 together coordinate substrate. Residues His157, His160, and His161 each coordinate Fe cation. The Histidine box-2 signature appears at 157–161 (HRAHH). 2 residues coordinate substrate: Arg188 and Lys189. Residue Ser203 is modified to Phosphoserine. The helical transmembrane segment at 218–237 (YKPGVLLLCFILPTLVPWYL) threads the bilayer. The Lumenal portion of the chain corresponds to 238–241 (WGET). Residues 242-263 (FQNSLFFATLLRYAVVLNATWL) form a helical membrane-spanning segment. Residue Trp262 coordinates substrate. Topologically, residues 264–359 (VNSAAHMYGY…RTGEESCKSG (96 aa)) are cytoplasmic. Fe cation-binding residues include His269, His298, His301, and His302. Residues 298-302 (HNYHH) carry the Histidine box-3 motif.

The protein belongs to the fatty acid desaturase type 1 family. Fe(2+) serves as cofactor.

The protein resides in the endoplasmic reticulum membrane. It carries out the reaction octadecanoyl-CoA + 2 Fe(II)-[cytochrome b5] + O2 + 2 H(+) = (9Z)-octadecenoyl-CoA + 2 Fe(III)-[cytochrome b5] + 2 H2O. It catalyses the reaction hexadecanoyl-CoA + 2 Fe(II)-[cytochrome b5] + O2 + 2 H(+) = (9Z)-hexadecenoyl-CoA + 2 Fe(III)-[cytochrome b5] + 2 H2O. Functionally, stearoyl-CoA desaturase that utilizes O(2) and electrons from reduced cytochrome b5 to introduce the first double bond into saturated fatty acyl-CoA substrates. Catalyzes the insertion of a cis double bond at the delta-9 position into fatty acyl-CoA substrates including palmitoyl-CoA and stearoyl-CoA. Gives rise to a mixture of 16:1 and 18:1 unsaturated fatty acids. Plays an important role in lipid biosynthesis. Plays an important role in regulating the expression of genes that are involved in lipogenesis and in regulating mitochondrial fatty acid oxidation. Plays an important role in body energy homeostasis. Contributes to the biosynthesis of membrane phospholipids, cholesterol esters and triglycerides. This chain is Stearoyl-CoA desaturase (SCD), found in Capra hircus (Goat).